A 388-amino-acid chain; its full sequence is Pepsin A (388 aa).

The signal sequence occupies residues 1–15 (MKWLLLLGLVALSEC). Residues 16-62 (IIYKVPLVRKKSLRRNLSEHGLLKDFLKKHNRNPASKYFPQTEAPTL) constitute a propeptide, activation peptide. One can recognise a Peptidase A1 domain in the interval 76–385 (YFGTIGIGTP…DRANNQVGLA (310 aa)). Asp-94 is an active-site residue. Cys-107 and Cys-112 are joined by a disulfide. The residue at position 130 (Ser-130) is a Phosphoserine. Residues Cys-268 and Cys-272 are joined by a disulfide bond. The active site involves Asp-277. Cys-311 and Cys-344 are oxidised to a cystine.

This sequence belongs to the peptidase A1 family.

The protein resides in the secreted. It carries out the reaction Preferential cleavage: hydrophobic, preferably aromatic, residues in P1 and P1' positions. Cleaves 1-Phe-|-Val-2, 4-Gln-|-His-5, 13-Glu-|-Ala-14, 14-Ala-|-Leu-15, 15-Leu-|-Tyr-16, 16-Tyr-|-Leu-17, 23-Gly-|-Phe-24, 24-Phe-|-Phe-25 and 25-Phe-|-Tyr-26 bonds in the B chain of insulin.. Shows particularly broad specificity; although bonds involving phenylalanine and leucine are preferred, many others are also cleaved to some extent. The polypeptide is Pepsin A (PGA) (Macaca mulatta (Rhesus macaque)).